A 282-amino-acid polypeptide reads, in one-letter code: tRNA N(3)-cytidine methyltransferase METTL6 (282 aa).

W45, Y49, G87, D110, D136, L137, and I157 together coordinate S-adenosyl-L-methionine.

Belongs to the methyltransferase superfamily. METL family. Monomer. Interacts with SARS1/SerRS; interaction is mediated via tRNA(Ser) and is required for N(3)-methylcytidine methylation.

The protein resides in the cytoplasm. Its subcellular location is the nucleus. It catalyses the reaction cytidine(32) in tRNA(Ser) + S-adenosyl-L-methionine = N(3)-methylcytidine(32) in tRNA(Ser) + S-adenosyl-L-homocysteine + H(+). Functionally, S-adenosyl-L-methionine-dependent methyltransferase that mediates N(3)-methylcytidine modification of residue 32 of the tRNA anticodon loop of tRNA(Ser), including tRNA(Ser)(UGA) and tRNA(Ser)(GCU). Interaction with SARS1/SerRS is required for N(3)-methylcytidine methylation. This is tRNA N(3)-cytidine methyltransferase METTL6 (METTL6) from Pongo abelii (Sumatran orangutan).